A 368-amino-acid polypeptide reads, in one-letter code: Saccharopine dehydrogenase [NAD(+), L-lysine-forming] (368 aa).

Residues Arg18 and Lys77 each contribute to the L-saccharopine site. Lys77 serves as the catalytic Proton acceptor. Ser85 carries the post-translational modification Phosphoserine. The active-site Proton donor is His96. Gln101 lines the L-saccharopine pocket. Residue Arg130 participates in NAD(+) binding. 2 residues coordinate L-saccharopine: Arg131 and Phe135. Residues 203-204 (GR), Asp227, Thr231, Tyr251, and Val278 contribute to the NAD(+) site. A disulfide bridge connects residues Cys205 and Cys249. 279 to 281 (SCD) serves as a coordination point for L-saccharopine. NAD(+) is bound at residue 319-322 (IDHL).

This sequence belongs to the AlaDH/PNT family. In terms of assembly, monomer.

It carries out the reaction L-saccharopine + NAD(+) + H2O = L-lysine + 2-oxoglutarate + NADH + H(+). It participates in amino-acid biosynthesis; L-lysine biosynthesis via AAA pathway; L-lysine from L-alpha-aminoadipate (fungal route): step 3/3. Its function is as follows. Catalyzes the NAD(+)-dependent cleavage of saccharopine to L-lysine and 2-oxoglutarate, the final step in the alpha-aminoadipate (AAA) pathway for lysin biosynthesis. In Schizosaccharomyces pombe (strain 972 / ATCC 24843) (Fission yeast), this protein is Saccharopine dehydrogenase [NAD(+), L-lysine-forming].